Reading from the N-terminus, the 151-residue chain is Ribosome maturation factor RimP (151 aa).

This sequence belongs to the RimP family.

It localises to the cytoplasm. Required for maturation of 30S ribosomal subunits. The polypeptide is Ribosome maturation factor RimP (Pasteurella multocida (strain Pm70)).